The following is a 69-amino-acid chain: U2-agatoxin-Ao1z (69 aa).

Residues 1 to 20 form the signal peptide; sequence MRAIISLLLISAMVFSMIEA. Positions 21 to 34 are excised as a propeptide; that stretch reads VPVEEGLQLFEGER. 3 disulfide bridges follow: Cys-37-Cys-53, Cys-44-Cys-58, and Cys-52-Cys-68.

Belongs to the neurotoxin 01 (U2-agtx) family. Expressed by the venom gland.

Its subcellular location is the secreted. Insect active toxin causing rapid but reversible paralysis in crickets. No activity shown in mammals. Does not show effect on mammalian voltage-gated calcium channels. The protein is U2-agatoxin-Ao1z of Agelena orientalis (Funnel-web spider).